We begin with the raw amino-acid sequence, 336 residues long: Deoxyhypusine hydroxylase (336 aa).

HEAT-like PBS-type repeat units follow at residues 68-94 and 101-127; these read LKHELAYCLGQTRNTDALPFLLDVVQD and CRHEAAEALGALGYESSLEVLKALRDN. Positions 70, 71, 103, and 104 each coordinate Fe cation. The interval 158 to 179 is disordered; that stretch reads LKPSDFTSIDPAPPMPLTAKEP. HEAT-like PBS-type repeat units follow at residues 235–261 and 268–295; these read FRHEIAFVFGQLCHPASVPSLTETLSD and VRHEAAEALGSLGDVEGVEDTLKKFLND. H237, E238, H270, and E271 together coordinate Fe cation.

The protein belongs to the deoxyhypusine hydroxylase family. Requires Fe(2+) as cofactor.

The protein localises to the cytoplasm. Its subcellular location is the nucleus. It carries out the reaction [eIF5A protein]-deoxyhypusine + AH2 + O2 = [eIF5A protein]-hypusine + A + H2O. The protein operates within protein modification; eIF5A hypusination. Its function is as follows. Catalyzes the hydroxylation of the N(6)-(4-aminobutyl)-L-lysine intermediate to form hypusine, an essential post-translational modification only found in mature eIF-5A factor. The sequence is that of Deoxyhypusine hydroxylase (lia1) from Emericella nidulans (strain FGSC A4 / ATCC 38163 / CBS 112.46 / NRRL 194 / M139) (Aspergillus nidulans).